The following is a 103-amino-acid chain: Large ribosomal subunit protein bL21 (103 aa).

Belongs to the bacterial ribosomal protein bL21 family. In terms of assembly, part of the 50S ribosomal subunit. Contacts protein L20.

Functionally, this protein binds to 23S rRNA in the presence of protein L20. This chain is Large ribosomal subunit protein bL21, found in Histophilus somni (strain 129Pt) (Haemophilus somnus).